The sequence spans 330 residues: Solute carrier family 25 member 16 (330 aa).

Solcar repeat units lie at residues 32–118, 126–214, and 236–326; these read FYWL…YKTL, SGHV…LKSV, and LKTH…MKQF. Transmembrane regions (helical) follow at residues 33-52, 95-112, 132-149, 189-209, 242-262, and 297-317; these read YWLR…KTTV, GAMM…FMAF, LMAG…TYPL, GLMP…FTFG, LLCG…FDVT, and GLYR…AVAF.

Belongs to the mitochondrial carrier (TC 2.A.29) family. In terms of tissue distribution, mostly in thyroid, liver, lung, kidney and to a lesser extent in heart and skeletal muscle.

The protein resides in the mitochondrion inner membrane. Its function is as follows. May be involved in the transport of coenzyme A in the mitochondrial matrix. Very little is known about the physiological function of this carrier. In Bos taurus (Bovine), this protein is Solute carrier family 25 member 16 (SLC25A16).